The sequence spans 269 residues: Putative pyruvate, phosphate dikinase regulatory protein (269 aa).

ADP is bound at residue 147-154 (GVSRTSKT).

It belongs to the pyruvate, phosphate/water dikinase regulatory protein family. PDRP subfamily.

It carries out the reaction N(tele)-phospho-L-histidyl/L-threonyl-[pyruvate, phosphate dikinase] + ADP = N(tele)-phospho-L-histidyl/O-phospho-L-threonyl-[pyruvate, phosphate dikinase] + AMP + H(+). The catalysed reaction is N(tele)-phospho-L-histidyl/O-phospho-L-threonyl-[pyruvate, phosphate dikinase] + phosphate + H(+) = N(tele)-phospho-L-histidyl/L-threonyl-[pyruvate, phosphate dikinase] + diphosphate. Functionally, bifunctional serine/threonine kinase and phosphorylase involved in the regulation of the pyruvate, phosphate dikinase (PPDK) by catalyzing its phosphorylation/dephosphorylation. The chain is Putative pyruvate, phosphate dikinase regulatory protein from Geotalea uraniireducens (strain Rf4) (Geobacter uraniireducens).